The primary structure comprises 173 residues: ATP-dependent protease subunit HslV (173 aa).

The active site involves Thr-2. Gly-158, Asp-161, and Thr-164 together coordinate Na(+).

This sequence belongs to the peptidase T1B family. HslV subfamily. A double ring-shaped homohexamer of HslV is capped on each side by a ring-shaped HslU homohexamer. The assembly of the HslU/HslV complex is dependent on binding of ATP.

Its subcellular location is the cytoplasm. It catalyses the reaction ATP-dependent cleavage of peptide bonds with broad specificity.. Allosterically activated by HslU binding. Its function is as follows. Protease subunit of a proteasome-like degradation complex believed to be a general protein degrading machinery. This Actinobacillus succinogenes (strain ATCC 55618 / DSM 22257 / CCUG 43843 / 130Z) protein is ATP-dependent protease subunit HslV.